Here is a 336-residue protein sequence, read N- to C-terminus: tRNA N6-adenosine threonylcarbamoyltransferase (336 aa).

Fe cation is bound by residues histidine 112 and histidine 116. Residues leucine 136–glycine 140, aspartate 169, glycine 182, and asparagine 276 contribute to the substrate site. Aspartate 304 is a binding site for Fe cation.

This sequence belongs to the KAE1 / TsaD family. Fe(2+) is required as a cofactor.

Its subcellular location is the cytoplasm. It catalyses the reaction L-threonylcarbamoyladenylate + adenosine(37) in tRNA = N(6)-L-threonylcarbamoyladenosine(37) in tRNA + AMP + H(+). Required for the formation of a threonylcarbamoyl group on adenosine at position 37 (t(6)A37) in tRNAs that read codons beginning with adenine. Is involved in the transfer of the threonylcarbamoyl moiety of threonylcarbamoyl-AMP (TC-AMP) to the N6 group of A37, together with TsaE and TsaB. TsaD likely plays a direct catalytic role in this reaction. This Francisella tularensis subsp. holarctica (strain FTNF002-00 / FTA) protein is tRNA N6-adenosine threonylcarbamoyltransferase.